A 999-amino-acid polypeptide reads, in one-letter code: Hypoxia up-regulated protein 1 (999 aa).

The N-terminal stretch at 1 to 32 (MAATVRRQRPRRLLCWALVAVLLADLLALSDT) is a signal peptide. N-linked (GlcNAc...) asparagine glycosylation is found at asparagine 155, asparagine 222, and asparagine 515. Serine 567 is modified (phosphoserine). The interval 567-694 (SPEEESTLTK…KKPKPARKQK (128 aa)) is disordered. Residues 574–583 (LTKLGNTISS) are compositionally biased toward polar residues. N-linked (GlcNAc...) asparagine glycosylation is present at asparagine 596. 2 stretches are compositionally biased toward basic and acidic residues: residues 611 to 626 (GSKD…KEEA) and 641 to 668 (PKGD…KPNE). Residues 669 to 680 (KGQAGPEGAAPA) show a composition bias toward low complexity. Residues asparagine 830, asparagine 862, and asparagine 869 are each glycosylated (N-linked (GlcNAc...) asparagine). N6-acetyllysine is present on lysine 883. A disordered region spans residues 909–999 (AKFTKPRPRP…QKRPSKNDEL (91 aa)). N-linked (GlcNAc...) asparagine glycosylation is found at asparagine 922 and asparagine 931. Residues 949-962 (EEAKPILEPDKEET) are compositionally biased toward basic and acidic residues. The Prevents secretion from ER signature appears at 996-999 (NDEL).

It belongs to the heat shock protein 70 family. In terms of assembly, part of a large chaperone multiprotein complex comprising DNAJB11, HSP90B1, HSPA5, HYOU, PDIA2, PDIA4, PDIA6, PPIB, SDF2L1, UGGT1 and very small amounts of ERP29, but not, or at very low levels, CALR nor CANX.

Its subcellular location is the endoplasmic reticulum lumen. Has a pivotal role in cytoprotective cellular mechanisms triggered by oxygen deprivation. Promotes HSPA5/BiP-mediated ATP nucleotide exchange and thereby activates the unfolded protein response (UPR) pathway in the presence of endoplasmic reticulum stress. May play a role as a molecular chaperone and participate in protein folding. The protein is Hypoxia up-regulated protein 1 (Hyou1) of Mus musculus (Mouse).